The sequence spans 1240 residues: Serine/threonine-protein kinase TAO2 (1240 aa).

Ser-9 is modified (phosphoserine). One can recognise a Protein kinase domain in the interval 28–281; sequence FSDLREIGHG…SEVLLKHRFV (254 aa). ATP is bound by residues 34-42 and Lys-57; that span reads IGHGSFGAV. Asp-151 functions as the Proton acceptor in the catalytic mechanism. Ser-181 is subject to Phosphoserine. Residues 320–463 are disordered; sequence APNGPGAEAP…PTSTSSSARR (144 aa). The span at 356–380 shows a compositional bias: low complexity; sequence SSHSVPSMSISASSQSSSVNSLADA. Acidic residues predominate over residues 381–401; that stretch reads SDNEEEEEEEEEEEEEEEEEG. Over residues 402 to 417 the composition is skewed to basic and acidic residues; the sequence is PESREMAMMQEGEHTV. Position 422 is a phosphoserine (Ser-422). 2 coiled-coil regions span residues 493 to 528 and 581 to 608; these read SALR…EEHS and KELA…LQEN. At Ser-663 the chain carries Phosphoserine. A coiled-coil region spans residues 688 to 720; the sequence is LRQHEATRELELRQLQAVQRTRAELTRLQHQTE. A phosphoserine mark is found at Ser-782, Ser-830, and Ser-832. The stretch at 805–934 forms a coiled coil; sequence RILGKEGTTL…GDGCPSPDIP (130 aa). The interval 899-946 is disordered; the sequence is VLTPVPEEEEEEEEEGGAPIGTHRDPGDGCPSPDIPPEPPPSHLRQYP. The span at 904 to 914 shows a compositional bias: acidic residues; it reads PEEEEEEEEEG. The segment covering 931 to 940 has biased composition (pro residues); that stretch reads PDIPPEPPPS. 5 helical membrane passes run 972–992, 994–1014, 1019–1039, 1045–1065, and 1175–1195; these read LLPL…GGGL, AALL…LFLC, LPPG…VLSL, LMGV…SLAL, and LASC…LLKG. Residue Leu-999 is modified to Omega-N-methylarginine. At Leu-1037 the chain carries Phosphoserine. Residues 1212 to 1240 form a disordered region; sequence LGLSASRQLPPGTVAGRRSQTRRTLPPWR.

This sequence belongs to the protein kinase superfamily. STE Ser/Thr protein kinase family. STE20 subfamily. In terms of assembly, interacts with MAP2K3 and MAP2K6. Self-associates. Interacts with tubulins. Interacts with MAP3K7 and interferes with MAP3K7-binding to CHUK and thus prevents NF-kappa-B activation. Isoform 2 interacts with PCDH8; this complex may also include CDH2. Requires Mg(2+) as cofactor. In terms of processing, autophosphorylated. Phosphorylated by ATM. Post-translationally, phosphorylated on Ser-1037 by MAPK14. This phosphorylation is required PCDH8 for endocytosis.

The protein resides in the cytoplasmic vesicle membrane. It localises to the cytoplasm. The protein localises to the cytoskeleton. It is found in the cell projection. Its subcellular location is the dendrite. It carries out the reaction L-seryl-[protein] + ATP = O-phospho-L-seryl-[protein] + ADP + H(+). It catalyses the reaction L-threonyl-[protein] + ATP = O-phospho-L-threonyl-[protein] + ADP + H(+). Its function is as follows. Serine/threonine-protein kinase involved in different processes such as membrane blebbing and apoptotic bodies formation DNA damage response and MAPK14/p38 MAPK stress-activated MAPK cascade. Phosphorylates itself, MBP, activated MAPK8, MAP2K3, MAP2K6 and tubulins. Activates the MAPK14/p38 MAPK signaling pathway through the specific activation and phosphorylation of the upstream MAP2K3 and MAP2K6 kinases. In response to DNA damage, involved in the G2/M transition DNA damage checkpoint by activating the p38/MAPK14 stress-activated MAPK cascade, probably by mediating phosphorylation of upstream MAP2K3 and MAP2K6 kinases. May affect microtubule organization and stability. May play a role in the osmotic stress-MAPK8 pathway. Prevents MAP3K7-mediated activation of CHUK, and thus NF-kappa-B activation. Isoform 2, but not isoform 1, is required for PCDH8 endocytosis. Following homophilic interactions between PCDH8 extracellular domains, isoform 2 phosphorylates and activates MAPK14/p38 MAPK which in turn phosphorylates isoform 2. This process leads to PCDH8 endocytosis and CDH2 cointernalization. Both isoforms are involved in MAPK14/p38 MAPK activation. The protein is Serine/threonine-protein kinase TAO2 (Taok2) of Mus musculus (Mouse).